A 296-amino-acid polypeptide reads, in one-letter code: Cytidine deaminase (296 aa).

2 CMP/dCMP-type deaminase domains span residues 47 to 167 and 186 to 296; these read SQDE…FGPA and ESAD…VDPV. 88-90 contacts substrate; the sequence is NLE. Histidine 101 lines the Zn(2+) pocket. Glutamate 103 (proton donor) is an active-site residue. Zn(2+)-binding residues include cysteine 128 and cysteine 131.

This sequence belongs to the cytidine and deoxycytidylate deaminase family. Homodimer. It depends on Zn(2+) as a cofactor.

It catalyses the reaction cytidine + H2O + H(+) = uridine + NH4(+). The enzyme catalyses 2'-deoxycytidine + H2O + H(+) = 2'-deoxyuridine + NH4(+). In terms of biological role, this enzyme scavenges exogenous and endogenous cytidine and 2'-deoxycytidine for UMP synthesis. The sequence is that of Cytidine deaminase from Shewanella loihica (strain ATCC BAA-1088 / PV-4).